A 148-amino-acid polypeptide reads, in one-letter code: Methylated-DNA--protein-cysteine methyltransferase (148 aa).

Cysteine 90 serves as the catalytic Nucleophile; methyl group acceptor.

This sequence belongs to the MGMT family.

It localises to the cytoplasm. It carries out the reaction a 6-O-methyl-2'-deoxyguanosine in DNA + L-cysteinyl-[protein] = S-methyl-L-cysteinyl-[protein] + a 2'-deoxyguanosine in DNA. The catalysed reaction is a 4-O-methyl-thymidine in DNA + L-cysteinyl-[protein] = a thymidine in DNA + S-methyl-L-cysteinyl-[protein]. Functionally, involved in the cellular defense against the biological effects of O6-methylguanine (O6-MeG) and O4-methylthymine (O4-MeT) in DNA. Repairs the methylated nucleobase in DNA by stoichiometrically transferring the methyl group to a cysteine residue in the enzyme. This is a suicide reaction: the enzyme is irreversibly inactivated. In Pyrobaculum aerophilum (strain ATCC 51768 / DSM 7523 / JCM 9630 / CIP 104966 / NBRC 100827 / IM2), this protein is Methylated-DNA--protein-cysteine methyltransferase (ogt).